The sequence spans 161 residues: MDDIYKAAVEQLTEEQKNEFKAAFDIFVLGAEDGCISTKELGKVMRMLGQNPTPEELQEMIDEVDEDGSGTVDFDQFLVMMVRCMKDDSKGKTEEELSDLFRMFDKNADGYIDLEELKIMLQATGETITEDDIEELMKDGNKNNDGRIDYDEFLQFMKGVE.

Met-1 bears the N-acetylmethionine mark. EF-hand domains are found at residues 16–51, 52–87, 92–127, and 128–161; these read QKNE…LGQN, PTPE…CMKD, KTEE…TGET, and ITED…KGVE. Ca(2+) is bound by residues Asp-65, Asp-67, Ser-69, Thr-71, Asp-105, Asn-107, Asp-109, Tyr-111, Glu-116, Asn-143, Asp-145, Arg-147, and Glu-152.

Belongs to the troponin C family.

Its function is as follows. Troponin is the central regulatory protein of striated muscle contraction. Tn consists of three components: Tn-I which is the inhibitor of actomyosin ATPase, Tn-T which contains the binding site for tropomyosin and Tn-C. The binding of calcium to Tn-C abolishes the inhibitory action of Tn on actin filaments. The protein is Troponin C, slow skeletal and cardiac muscles (TNNC1) of Coturnix japonica (Japanese quail).